A 544-amino-acid polypeptide reads, in one-letter code: U1 small nuclear ribonucleoprotein component PRP42 (544 aa).

HAT repeat units follow at residues 7 to 39, 51 to 83, 85 to 118, 121 to 156, and 163 to 195; these read LIHD…YIVK, QLLK…LEYK, GNVS…FCNN, SHQK…QISS, and KYWN…DIMD. Positions 230–235 match the Nuclear localization signal motif; it reads KKKLKK. HAT repeat units lie at residues 255–288, 290–322, 366–397, and 456–488; these read FESK…YTIT, QTDS…WLIN, NLLE…FKTF, and VEKN…LIYF.

In terms of assembly, component of the 18S U1 snRNP particle, a subcomplex of the spliceosome.

It localises to the nucleus. In terms of biological role, essential component of the U1 snRNP particle, which recognizes and binds the 5'-splice site of pre-mRNA. Together with other non-snRNP factors, U1 snRNP forms the spliceosomal commitment complex, that targets pre-mRNA to the splicing pathway. U1 snRNP is cotranscriptionally recruited to intron-containing genes. Required for U1 snRNP biogenesis. The sequence is that of U1 small nuclear ribonucleoprotein component PRP42 (PRP42) from Saccharomyces cerevisiae (strain ATCC 204508 / S288c) (Baker's yeast).